The chain runs to 341 residues: Phenylalanine--tRNA ligase alpha subunit (341 aa).

E256 is a binding site for Mg(2+).

The protein belongs to the class-II aminoacyl-tRNA synthetase family. Phe-tRNA synthetase alpha subunit type 1 subfamily. As to quaternary structure, tetramer of two alpha and two beta subunits. The cofactor is Mg(2+).

Its subcellular location is the cytoplasm. It catalyses the reaction tRNA(Phe) + L-phenylalanine + ATP = L-phenylalanyl-tRNA(Phe) + AMP + diphosphate + H(+). The polypeptide is Phenylalanine--tRNA ligase alpha subunit (Chlamydia abortus (strain DSM 27085 / S26/3) (Chlamydophila abortus)).